We begin with the raw amino-acid sequence, 332 residues long: NADH-quinone oxidoreductase subunit H (332 aa).

Helical transmembrane passes span 4-24 (FAFF…IFAS), 44-64 (IGPD…MIKL), 78-98 (FIFA…LAAI), 120-140 (VALL…FLGG), 165-185 (VGAL…LVDI), 194-214 (FSWL…ALFI), 255-275 (IAGA…FWII), 279-299 (IMMI…RAAF), and 312-332 (YLIL…TVLL).

This sequence belongs to the complex I subunit 1 family. As to quaternary structure, NDH-1 is composed of 14 different subunits. Subunits NuoA, H, J, K, L, M, N constitute the membrane sector of the complex.

It localises to the cell inner membrane. The catalysed reaction is a quinone + NADH + 5 H(+)(in) = a quinol + NAD(+) + 4 H(+)(out). NDH-1 shuttles electrons from NADH, via FMN and iron-sulfur (Fe-S) centers, to quinones in the respiratory chain. The immediate electron acceptor for the enzyme in this species is believed to be ubiquinone. Couples the redox reaction to proton translocation (for every two electrons transferred, four hydrogen ions are translocated across the cytoplasmic membrane), and thus conserves the redox energy in a proton gradient. This subunit may bind ubiquinone. This chain is NADH-quinone oxidoreductase subunit H, found in Campylobacter jejuni subsp. jejuni serotype O:2 (strain ATCC 700819 / NCTC 11168).